Here is a 651-residue protein sequence, read N- to C-terminus: Endoplasmic reticulum chaperone BiP (651 aa).

An N-terminal signal peptide occupies residues 1-20 (MGLSTYVGIFLLCILTLSRC). Residues 36-39 (GTTY), Lys-96, 226-228 (GGT), 292-299 (EKAKRTLS), and 363-366 (GSTR) contribute to the ATP site. The segment at 125–279 (KPYMKVQVGS…KKKEGKDITK (155 aa)) is nucleotide-binding (NBD). The tract at residues 399–499 (VQAGVISGVE…PRGLPQIEVT (101 aa)) is substrate-binding (SBD). A Prevents secretion from ER motif is present at residues 648–651 (KEEL).

It belongs to the heat shock protein 70 family.

The protein localises to the endoplasmic reticulum lumen. It carries out the reaction ATP + H2O = ADP + phosphate + H(+). With respect to regulation, the chaperone activity is regulated by ATP-induced allosteric coupling of the nucleotide-binding (NBD) and substrate-binding (SBD) domains. In the ADP-bound and nucleotide-free (apo) states, the two domains have little interaction. In contrast, in the ATP-bound state the two domains are tightly coupled, which results in drastically accelerated kinetics in both binding and release of polypeptide substrates. J domain-containing co-chaperones stimulate the ATPase activity and are required for efficient substrate recognition. In terms of biological role, endoplasmic reticulum chaperone that plays a key role in protein folding and quality control in the endoplasmic reticulum lumen. Involved in the correct folding of proteins and degradation of misfolded proteins. Acts as a key repressor of the unfolded protein response (UPR). The protein is Endoplasmic reticulum chaperone BiP of Echinococcus granulosus (Hydatid tapeworm).